We begin with the raw amino-acid sequence, 477 residues long: Aspartyl/glutamyl-tRNA(Asn/Gln) amidotransferase subunit B (477 aa).

This sequence belongs to the GatB/GatE family. GatB subfamily. Heterotrimer of A, B and C subunits.

The catalysed reaction is L-glutamyl-tRNA(Gln) + L-glutamine + ATP + H2O = L-glutaminyl-tRNA(Gln) + L-glutamate + ADP + phosphate + H(+). The enzyme catalyses L-aspartyl-tRNA(Asn) + L-glutamine + ATP + H2O = L-asparaginyl-tRNA(Asn) + L-glutamate + ADP + phosphate + 2 H(+). Functionally, allows the formation of correctly charged Asn-tRNA(Asn) or Gln-tRNA(Gln) through the transamidation of misacylated Asp-tRNA(Asn) or Glu-tRNA(Gln) in organisms which lack either or both of asparaginyl-tRNA or glutaminyl-tRNA synthetases. The reaction takes place in the presence of glutamine and ATP through an activated phospho-Asp-tRNA(Asn) or phospho-Glu-tRNA(Gln). In Legionella pneumophila subsp. pneumophila (strain Philadelphia 1 / ATCC 33152 / DSM 7513), this protein is Aspartyl/glutamyl-tRNA(Asn/Gln) amidotransferase subunit B.